A 185-amino-acid chain; its full sequence is Ribosome-recycling factor (185 aa).

It belongs to the RRF family.

It is found in the cytoplasm. In terms of biological role, responsible for the release of ribosomes from messenger RNA at the termination of protein biosynthesis. May increase the efficiency of translation by recycling ribosomes from one round of translation to another. In Symbiobacterium thermophilum (strain DSM 24528 / JCM 14929 / IAM 14863 / T), this protein is Ribosome-recycling factor.